The sequence spans 230 residues: MAHNKRLKAARASVDSTKFYPLTEAVALAKTNARAKFDETIEISLNLGIDPRHADQMVRGLVSLPNGTGKTLRVGVFARGPKAEEAKAAGADVVGAEDLAELVQNGTIEFDRCIATPDMMALVGRLGKILGPRGLMPNPKLGTVTMDVKGAVTAAKSGQIEFRAEKAGIIHAGIGKASFDADKLVENIRALVDAIQKAKPTGAKGTYLQKAALSSSMGPGMRLDVSSLTV.

The protein belongs to the universal ribosomal protein uL1 family. In terms of assembly, part of the 50S ribosomal subunit.

Binds directly to 23S rRNA. The L1 stalk is quite mobile in the ribosome, and is involved in E site tRNA release. Functionally, protein L1 is also a translational repressor protein, it controls the translation of the L11 operon by binding to its mRNA. The protein is Large ribosomal subunit protein uL1 of Granulibacter bethesdensis (strain ATCC BAA-1260 / CGDNIH1).